The chain runs to 527 residues: CTP synthase (527 aa).

The interval 1-270 (MKYIFVTGGV…ADVLCQLLQL (270 aa)) is amidoligase domain. Residue Ser12 coordinates CTP. Position 12 (Ser12) interacts with UTP. Residues 13–18 (GLGKGI) and Asp70 each bind ATP. 2 residues coordinate Mg(2+): Asp70 and Glu145. CTP is bound by residues 152-154 (DIE), 191-196 (KTKPTQ), and Lys227. UTP is bound by residues 191–196 (KTKPTQ) and Lys227. Positions 292 to 525 (TIGIVSKYGK…VEACLKNRGK (234 aa)) constitute a Glutamine amidotransferase type-1 domain. Gly349 lines the L-glutamine pocket. Cys376 acts as the Nucleophile; for glutamine hydrolysis in catalysis. L-glutamine-binding positions include 377–380 (LGFQ), Glu400, and Arg455. Catalysis depends on residues His498 and Glu500.

Belongs to the CTP synthase family. As to quaternary structure, homotetramer.

The catalysed reaction is UTP + L-glutamine + ATP + H2O = CTP + L-glutamate + ADP + phosphate + 2 H(+). The enzyme catalyses L-glutamine + H2O = L-glutamate + NH4(+). It carries out the reaction UTP + NH4(+) + ATP = CTP + ADP + phosphate + 2 H(+). The protein operates within pyrimidine metabolism; CTP biosynthesis via de novo pathway; CTP from UDP: step 2/2. With respect to regulation, allosterically activated by GTP, when glutamine is the substrate; GTP has no effect on the reaction when ammonia is the substrate. The allosteric effector GTP functions by stabilizing the protein conformation that binds the tetrahedral intermediate(s) formed during glutamine hydrolysis. Inhibited by the product CTP, via allosteric rather than competitive inhibition. In terms of biological role, catalyzes the ATP-dependent amination of UTP to CTP with either L-glutamine or ammonia as the source of nitrogen. Regulates intracellular CTP levels through interactions with the four ribonucleotide triphosphates. The sequence is that of CTP synthase from Methanospirillum hungatei JF-1 (strain ATCC 27890 / DSM 864 / NBRC 100397 / JF-1).